The following is a 750-amino-acid chain: Photosystem I P700 chlorophyll a apoprotein A1 (750 aa).

8 helical membrane-spanning segments follow: residues 70-93 (VFSA…FHGA), 156-179 (LYST…FHYH), 195-219 (LNHH…HVSL), 291-309 (TAHH…GHMY), 346-369 (WHAQ…HHMY), 385-411 (LSLF…IFMV), 433-455 (AIIS…LYIH), and 531-549 (FLVH…LILL). Residues Cys573 and Cys582 each coordinate [4Fe-4S] cluster. The next 2 membrane-spanning stretches (helical) occupy residues 589-610 (HVFL…HFSW) and 664-686 (LSAY…MFLF). His675 lines the chlorophyll a' pocket. Residues Met683 and Tyr691 each contribute to the chlorophyll a site. Trp692 serves as a coordination point for phylloquinone. The helical transmembrane segment at 724–744 (AVGVAHYLLGGIATTWAFFLA) threads the bilayer.

This sequence belongs to the PsaA/PsaB family. In terms of assembly, the PsaA/B heterodimer binds the P700 chlorophyll special pair and subsequent electron acceptors. PSI consists of a core antenna complex that captures photons, and an electron transfer chain that converts photonic excitation into a charge separation. The eukaryotic PSI reaction center is composed of at least 11 subunits. P700 is a chlorophyll a/chlorophyll a' dimer, A0 is one or more chlorophyll a, A1 is one or both phylloquinones and FX is a shared 4Fe-4S iron-sulfur center. serves as cofactor.

Its subcellular location is the plastid. It localises to the chloroplast thylakoid membrane. The catalysed reaction is reduced [plastocyanin] + hnu + oxidized [2Fe-2S]-[ferredoxin] = oxidized [plastocyanin] + reduced [2Fe-2S]-[ferredoxin]. Functionally, psaA and PsaB bind P700, the primary electron donor of photosystem I (PSI), as well as the electron acceptors A0, A1 and FX. PSI is a plastocyanin-ferredoxin oxidoreductase, converting photonic excitation into a charge separation, which transfers an electron from the donor P700 chlorophyll pair to the spectroscopically characterized acceptors A0, A1, FX, FA and FB in turn. Oxidized P700 is reduced on the lumenal side of the thylakoid membrane by plastocyanin. In Marchantia polymorpha (Common liverwort), this protein is Photosystem I P700 chlorophyll a apoprotein A1.